The following is a 454-amino-acid chain: Epoxide hydrolase 1 (454 aa).

Residues 1-21 traverse the membrane as a helical segment; it reads MWLEILLASVLGFVIYWFVSK. At 22–454 the chain is on the cytoplasmic side; it reads DKEETLLLGD…RKFMGLLEQQ (433 aa). Aspartate 226 (nucleophile) is an active-site residue. Position 294 is a dimethylated arginine (arginine 294). Tyrosine 373 serves as the catalytic Proton donor. Catalysis depends on histidine 430, which acts as the Proton acceptor.

It belongs to the peptidase S33 family.

It localises to the microsome membrane. It is found in the endoplasmic reticulum membrane. The enzyme catalyses cis-stilbene oxide + H2O = (1R,2R)-hydrobenzoin. It carries out the reaction 1-(4-methoxyphenyl)-N-methyl-N-[(3-methyloxetan-3-yl)methyl]methanamine + H2O = 2-{[(4-methoxybenzyl)(methyl)amino]methyl}-2-methylpropane-1,3-diol. The catalysed reaction is 8,9-epoxy-(5Z,11Z,14Z)-eicosatrienoate + H2O = 8,9-dihydroxy-(5Z,11Z,14Z)-eicosatrienoate. It catalyses the reaction 11,12-epoxy-(5Z,8Z,14Z)-eicosatrienoate + H2O = 11,12-dihydroxy-(5Z,8Z,14Z)-eicosatrienoate. The enzyme catalyses 2-(5Z,8Z,11Z,14Z-eicosatetraenoyl)-glycerol + H2O = glycerol + (5Z,8Z,11Z,14Z)-eicosatetraenoate + H(+). Its activity is regulated as follows. Inhibited by 10-hydroxystearamide and methoxy-arachidonyl fluorophosphate. Its function is as follows. Biotransformation enzyme that catalyzes the hydrolysis of arene and aliphatic epoxides to less reactive and more water soluble dihydrodiols by the trans addition of water. May play a role in the metabolism of endogenous lipids such as epoxide-containing fatty acids. Metabolizes the abundant endocannabinoid 2-arachidonoylglycerol (2-AG) to free arachidonic acid (AA) and glycerol. Binds 20(S)-hydroxycholesterol (20(S)-OHC). This Sus scrofa (Pig) protein is Epoxide hydrolase 1 (EPHX1).